A 951-amino-acid chain; its full sequence is Valine--tRNA ligase (951 aa).

The 'HIGH' region motif lies at 42-52 (PNVTGSLHMGH). The 'KMSKS' region motif lies at 554 to 558 (KMSKS). ATP is bound at residue Lys-557. Residues 880 to 944 (AGLINKEDEL…AEAKAKLIEQ (65 aa)) adopt a coiled-coil conformation.

The protein belongs to the class-I aminoacyl-tRNA synthetase family. ValS type 1 subfamily. As to quaternary structure, monomer.

It localises to the cytoplasm. The enzyme catalyses tRNA(Val) + L-valine + ATP = L-valyl-tRNA(Val) + AMP + diphosphate. Functionally, catalyzes the attachment of valine to tRNA(Val). As ValRS can inadvertently accommodate and process structurally similar amino acids such as threonine, to avoid such errors, it has a 'posttransfer' editing activity that hydrolyzes mischarged Thr-tRNA(Val) in a tRNA-dependent manner. The polypeptide is Valine--tRNA ligase (Shigella boydii serotype 4 (strain Sb227)).